The following is a 429-amino-acid chain: Adenylosuccinate synthetase (429 aa).

GTP contacts are provided by residues 12 to 18 (GDEGKGK) and 40 to 42 (GHT). Catalysis depends on Asp-13, which acts as the Proton acceptor. 2 residues coordinate Mg(2+): Asp-13 and Gly-40. IMP-binding positions include 13 to 16 (DEGK), 38 to 41 (NAGH), Thr-128, Arg-142, Gln-223, Thr-238, and Arg-302. Catalysis depends on His-41, which acts as the Proton donor. 298–304 (TTTGRPR) contacts substrate. GTP is bound by residues Arg-304, 330–332 (CID), and 412–414 (SVG).

The protein belongs to the adenylosuccinate synthetase family. As to quaternary structure, homodimer. The cofactor is Mg(2+).

The protein localises to the cytoplasm. It catalyses the reaction IMP + L-aspartate + GTP = N(6)-(1,2-dicarboxyethyl)-AMP + GDP + phosphate + 2 H(+). It functions in the pathway purine metabolism; AMP biosynthesis via de novo pathway; AMP from IMP: step 1/2. Its function is as follows. Plays an important role in the de novo pathway of purine nucleotide biosynthesis. Catalyzes the first committed step in the biosynthesis of AMP from IMP. The sequence is that of Adenylosuccinate synthetase from Streptococcus mutans serotype c (strain ATCC 700610 / UA159).